A 92-amino-acid polypeptide reads, in one-letter code: Signal recognition particle 19 kDa protein (92 aa).

The protein belongs to the SRP19 family. Part of the signal recognition particle protein translocation system, which is composed of SRP and FtsY. Archaeal SRP consists of a 7S RNA molecule of 300 nucleotides and two protein subunits: SRP54 and SRP19.

Its subcellular location is the cytoplasm. Involved in targeting and insertion of nascent membrane proteins into the cytoplasmic membrane. Binds directly to 7S RNA and mediates binding of the 54 kDa subunit of the SRP. The polypeptide is Signal recognition particle 19 kDa protein (Methanosphaera stadtmanae (strain ATCC 43021 / DSM 3091 / JCM 11832 / MCB-3)).